We begin with the raw amino-acid sequence, 859 residues long: MSKNTSDLSSHTPMMQQYWRLKNQHPDQLMFYRMGDFYEIFYEDAKKAAKLLDITLTARGQSAGQAIPMCGIPYHAAEGYLAKLVKLGESVVICEQVGDPATSKGPVERQVVRIITPGTVSDEALLDERRDNLIAAVLGDERLFGLAVLDITSGNFSVLEIKGWENLLAELERINPVELLIPDDWPQGLPAEKRRGVRRRAPWDFERDSAHKSLCQQFSTQDLKGFGCETLTLAIGAAGCLLSYAKETQRTALPHLRSLRHERLDDTVVLDGASRRNLELDTNLAGGRDNTLQSVVDRCQTAMGSRLLTRWLNRPLRDLKVLEARQSSITCLLDGYRFERLQPQLKEIGDIERILARIGLRNARPRDLARLRDALAALPELQEAMTELEATHLNQLAATTSTYPELAALLAKAIIDNPPAVIRDGGVLKTGYDAELDELQSLSENAGQFLIDLEAREKARTGLANLKVGYNRIHGYFIELPSKQAEQAPADYIRRQTLKGAERFITPELKEFEDKALSAKSRALAREKMLYDALLETLISHLPPLQDTAGALAELDVLSNLAERALNLDLNCPRFVSEPCMRITQGRHPVVEQVLTTPFVANDLSLDDNTRMLVITGPNMGGKSTYMRQTALIVLLAHIGSFVPAASCELSLVDRIFTRIGSSDDLAGGRSTFMVEMSETANILHNATERSLVLMDEVGRGTSTFDGLSLAWAAAERLAHLRAYTLFATHYFELTVLPESEPLVANVHLNATEHNERIVFLHHVLPGPASQSYGLAVAQLAGVPSAVITRAREHLSRLETTSLPHEVAPQAPGKPSVPQQSDMFASLPHPVLDDLAKLDLDDMTPRRALEMLYTLKTRI.

Residue 617 to 624 (GPNMGGKS) participates in ATP binding. The interval 801 to 820 (TSLPHEVAPQAPGKPSVPQQ) is disordered.

This sequence belongs to the DNA mismatch repair MutS family.

Functionally, this protein is involved in the repair of mismatches in DNA. It is possible that it carries out the mismatch recognition step. This protein has a weak ATPase activity. This Pseudomonas fluorescens (strain ATCC BAA-477 / NRRL B-23932 / Pf-5) protein is DNA mismatch repair protein MutS.